We begin with the raw amino-acid sequence, 134 residues long: Large ribosomal subunit protein eL27 (134 aa).

Residues 5-40 (LKSGKVVVVLSGRFAGKKAVIVRNFDDGTSSRPYGH) enclose the KOW domain.

Belongs to the eukaryotic ribosomal protein eL27 family.

The polypeptide is Large ribosomal subunit protein eL27 (RPL27) (Pyrobotrys stellatus (Green alga)).